Reading from the N-terminus, the 156-residue chain is Small ribosomal subunit protein uS7 (156 aa).

Belongs to the universal ribosomal protein uS7 family. As to quaternary structure, part of the 30S ribosomal subunit. Contacts proteins S9 and S11.

In terms of biological role, one of the primary rRNA binding proteins, it binds directly to 16S rRNA where it nucleates assembly of the head domain of the 30S subunit. Is located at the subunit interface close to the decoding center, probably blocks exit of the E-site tRNA. The chain is Small ribosomal subunit protein uS7 from Hyphomonas neptunium (strain ATCC 15444).